The sequence spans 574 residues: Pre-mRNA-processing protein 45 (574 aa).

5 disordered regions span residues 1–46 (MAAL…WKPK), 203–234 (PPRF…TAQD), 350–406 (ETGI…SEMR), 478–503 (AGSS…SKDR), and 549–574 (MDAA…ARDE). Pro residues-rich tracts occupy residues 24-33 (APLPTTPGPQ) and 215-224 (PAEPPPPVLQ). Over residues 363–377 (GSEEESDEEEEDEEA) the composition is skewed to acidic residues. 3 stretches are compositionally biased toward basic and acidic residues: residues 378–397 (IRER…KEMR), 493–503 (EGIKEEMSKDR), and 558–574 (RTAE…ARDE).

The protein belongs to the SNW family. Associated with the spliceosome.

It is found in the nucleus. Its function is as follows. Involved in pre-mRNA splicing. In Cryptococcus neoformans var. neoformans serotype D (strain JEC21 / ATCC MYA-565) (Filobasidiella neoformans), this protein is Pre-mRNA-processing protein 45 (PRP45).